The sequence spans 2210 residues: Mediator of RNA polymerase II transcription subunit 13-like (2210 aa).

Over residues 391–400 (SKRSQMSTPT) the composition is skewed to polar residues. Disordered regions lie at residues 391-414 (SKRS…TWDF), 435-489 (AVGP…PFHH), and 519-582 (VSSS…NPAL). Over residues 445 to 458 (SQPGFSAGPSSSSS) the composition is skewed to low complexity. Over residues 468–480 (KTAERQEKGDKLQ) the composition is skewed to basic and acidic residues. Residues 533–544 (SRNTSKQMNLNP) show a composition bias toward polar residues. Positions 551–560 (PISPLPPTLS) are enriched in pro residues. Residues S553 and S560 each carry the phosphoserine modification. The LXXLL motif 1 signature appears at 669-673 (LQRLL). Residues 736–752 (GTEKDSLKKNKSEDGFG) are compositionally biased toward basic and acidic residues. Residues 736–770 (GTEKDSLKKNKSEDGFGTKDVTTPGHSTPVPDGKN) form a disordered region. A phosphoserine mark is found at S817, S826, and S923. Residues 1016-1096 (PQMNTPVTLN…STTRPLNSVE (81 aa)) form a disordered region. Residues 1025–1036 (NSAAPASNSGAG) show a composition bias toward low complexity. Residues 1077–1092 (TDQGSPASTPSTTRPL) show a composition bias toward polar residues. Positions 1225–1229 (LLLLL) match the LXXLL motif 2 motif. A leucine-zipper region spans residues 1380 to 1401 (LPIPTLLVGYDKDFLTISPFSL). 2 disordered regions span residues 1530 to 1656 (QTPP…VTER) and 2045 to 2080 (GNLH…QGER). Low complexity predominate over residues 1531–1608 (TPPAAAQGQA…ISTTSSSGFS (78 aa)). The span at 1615–1629 (NPSTGGISADRTQGN) shows a compositional bias: polar residues. Over residues 1637–1650 (DPGQSSSQPSQDGQ) the composition is skewed to low complexity. Phosphoserine is present on S2083.

The protein belongs to the Mediator complex subunit 13 family. Component of the Mediator complex, which is composed of MED1, MED4, MED6, MED7, MED8, MED9, MED10, MED11, MED12, MED13, MED13L, MED14, MED15, MED16, MED17, MED18, MED19, MED20, MED21, MED22, MED23, MED24, MED25, MED26, MED27, MED29, MED30, MED31, CCNC, CDK8 and CDC2L6/CDK11. The MED12, MED13, CCNC and CDK8 subunits form a distinct module termed the CDK8 module. Mediator containing the CDK8 module is less active than Mediator lacking this module in supporting transcriptional activation. Individual preparations of the Mediator complex lacking one or more distinct subunits have been variously termed ARC, CRSP, DRIP, PC2, SMCC and TRAP. In terms of tissue distribution, highly expressed in brain (cerebellum), heart (aorta), skeletal muscle, kidney, placenta and peripheral blood leukocytes. Highly expressed in fetal brain.

The protein localises to the nucleus. Component of the Mediator complex, a coactivator involved in the regulated transcription of nearly all RNA polymerase II-dependent genes. Mediator functions as a bridge to convey information from gene-specific regulatory proteins to the basal RNA polymerase II transcription machinery. Mediator is recruited to promoters by direct interactions with regulatory proteins and serves as a scaffold for the assembly of a functional preinitiation complex with RNA polymerase II and the general transcription factors. This subunit may specifically regulate transcription of targets of the Wnt signaling pathway and SHH signaling pathway. In Homo sapiens (Human), this protein is Mediator of RNA polymerase II transcription subunit 13-like (MED13L).